Reading from the N-terminus, the 178-residue chain is Large ribosomal subunit protein bL25 (178 aa).

It belongs to the bacterial ribosomal protein bL25 family. CTC subfamily. In terms of assembly, part of the 50S ribosomal subunit; part of the 5S rRNA/L5/L18/L25 subcomplex. Contacts the 5S rRNA. Binds to the 5S rRNA independently of L5 and L18.

Its function is as follows. This is one of the proteins that binds to the 5S RNA in the ribosome where it forms part of the central protuberance. The polypeptide is Large ribosomal subunit protein bL25 (Helicobacter pylori (strain J99 / ATCC 700824) (Campylobacter pylori J99)).